Reading from the N-terminus, the 496-residue chain is Protein disulfide-isomerase (496 aa).

An N-terminal signal peptide occupies residues 1 to 18 (MKFLICALFLAASYVAAS). Thioredoxin domains are found at residues 19 to 134 (AEAE…KKTG) and 349 to 474 (GKLK…ANGE). Catalysis depends on nucleophile residues Cys-56, Cys-59, Cys-397, and Cys-400. 2 cysteine pairs are disulfide-bonded: Cys-56–Cys-59 and Cys-397–Cys-400. The tract at residues 473-496 (GEVADSEPVEETEEEEEAPKKDEL) is disordered. Acidic residues predominate over residues 476–489 (ADSEPVEETEEEEE). Positions 493–496 (KDEL) match the Prevents secretion from ER motif.

It belongs to the protein disulfide isomerase family. In terms of assembly, homodimer. As to expression, expressed in all head and body tissues.

Its subcellular location is the endoplasmic reticulum lumen. It catalyses the reaction Catalyzes the rearrangement of -S-S- bonds in proteins.. Participates in the folding of proteins containing disulfide bonds. The sequence is that of Protein disulfide-isomerase (Pdi) from Drosophila melanogaster (Fruit fly).